Here is a 473-residue protein sequence, read N- to C-terminus: Photosystem II CP43 reaction center protein (473 aa).

A propeptide spanning residues 1-14 (MKTLYSLRRFYHVE) is cleaved from the precursor. T15 is subject to N-acetylthreonine. Position 15 is a phosphothreonine (T15). The next 5 helical transmembrane spans lie at 69 to 93 (LFEV…PHLA), 134 to 155 (LLGP…KDRN), 178 to 200 (KALY…RKIT), 255 to 275 (KPFA…LSYS), and 291 to 312 (WFNN…ASQA). E367 is a binding site for [CaMn4O5] cluster. A helical membrane pass occupies residues 447-471 (RARAAAAGFEKGIDRDFEPVLSMTP).

This sequence belongs to the PsbB/PsbC family. PsbC subfamily. PSII is composed of 1 copy each of membrane proteins PsbA, PsbB, PsbC, PsbD, PsbE, PsbF, PsbH, PsbI, PsbJ, PsbK, PsbL, PsbM, PsbT, PsbX, PsbY, PsbZ, Psb30/Ycf12, at least 3 peripheral proteins of the oxygen-evolving complex and a large number of cofactors. It forms dimeric complexes. Binds multiple chlorophylls and provides some of the ligands for the Ca-4Mn-5O cluster of the oxygen-evolving complex. It may also provide a ligand for a Cl- that is required for oxygen evolution. PSII binds additional chlorophylls, carotenoids and specific lipids. serves as cofactor.

The protein localises to the plastid. It is found in the chloroplast thylakoid membrane. One of the components of the core complex of photosystem II (PSII). It binds chlorophyll and helps catalyze the primary light-induced photochemical processes of PSII. PSII is a light-driven water:plastoquinone oxidoreductase, using light energy to abstract electrons from H(2)O, generating O(2) and a proton gradient subsequently used for ATP formation. The polypeptide is Photosystem II CP43 reaction center protein (Chloranthus spicatus (Chulantree)).